A 950-amino-acid chain; its full sequence is Serine/threonine-protein kinase atg1 (950 aa).

Residues 6 to 311 (YTRLDEIGRG…FPDFFENGVI (306 aa)) form the Protein kinase domain. Residues 12–20 (IGRGSFATV) and Lys-35 each bind ATP. Asp-149 functions as the Proton acceptor in the catalytic mechanism. Disordered stretches follow at residues 314–425 (PIPG…HATA), 443–467 (RQRGRNTFSEGSPQTDRQADKLREE), 505–570 (QGGI…QSPT), 671–690 (VQTDPSSKGNLAGERENPDS), and 926–950 (PTPSANVPSKMAPLNPVSVGATPPK). 3 stretches are compositionally biased toward polar residues: residues 370–389 (GLTQRPPSQNQRFGTPPTTT), 447–458 (RNTFSEGSPQTD), and 511–520 (GAQTGALSRR). Basic and acidic residues predominate over residues 549–565 (SRADSMHNRQSSYERRY).

The protein belongs to the protein kinase superfamily. Ser/Thr protein kinase family. APG1/unc-51/ULK1 subfamily. Homodimer. Forms a ternary complex with ATG13 and ATG17.

The protein localises to the cytoplasm. It localises to the preautophagosomal structure membrane. It catalyses the reaction L-seryl-[protein] + ATP = O-phospho-L-seryl-[protein] + ADP + H(+). The catalysed reaction is L-threonyl-[protein] + ATP = O-phospho-L-threonyl-[protein] + ADP + H(+). Its function is as follows. Serine/threonine protein kinase involved in the cytoplasm to vacuole transport (Cvt) and found to be essential in autophagy, where it is required for the formation of autophagosomes. Involved in the clearance of protein aggregates which cannot be efficiently cleared by the proteasome. Required for selective autophagic degradation of the nucleus (nucleophagy) as well as for mitophagy which contributes to regulate mitochondrial quantity and quality by eliminating the mitochondria to a basal level to fulfill cellular energy requirements and preventing excess ROS production. Also involved in endoplasmic reticulum-specific autophagic process, in selective removal of ER-associated degradation (ERAD) substrates. Plays a key role in ATG9 and ATG23 cycling through the pre-autophagosomal structure and is necessary to promote ATG18 binding to ATG9 through phosphorylation of ATG9. Catalyzes phosphorylation of ATG4, decreasing the interaction between ATG4 and ATG8 and impairing deconjugation of PE-conjugated forms of ATG8. This is Serine/threonine-protein kinase atg1 from Neosartorya fischeri (strain ATCC 1020 / DSM 3700 / CBS 544.65 / FGSC A1164 / JCM 1740 / NRRL 181 / WB 181) (Aspergillus fischerianus).